We begin with the raw amino-acid sequence, 81 residues long: Delta-conotoxin PVIA (81 aa).

Positions 1–22 (MKLTCVMIVAVLFLTAWTFVTA) are cleaved as a signal peptide. The propeptide occupies 23-49 (DDSKNGLENHFWKARDEMKNREASKLD). Intrachain disulfides connect C54/C69, C61/C73, and C68/C78. P57 and P65 each carry 4-hydroxyproline. At G80 the chain carries Glycine amide; in form delta-conotoxin PVIA.

Post-translationally, the difference between delta-conotoxin PVIA and [deamido]-delta-conotoxin PVIA lies in the state of amidation of Gly-80. Expressed by the venom duct.

Its subcellular location is the secreted. In terms of biological role, delta-conotoxins bind to site 6 of voltage-gated sodium channels (Nav) and inhibit the inactivation process. This toxin shows weak effects on rNav1.2/SCN2A (EC(50)=2.9 uM), rNav1.4/SCN4A (EC(50)=5.2 uM), hNav1.7/SCN9A (EC(50)=1.9 uM) and rNav1.7/SCN9A (EC(50)=6.4 uM). In vivo, this toxin shows different effects. In mice, injection of this toxin causes hyperactivity, rapid running, limb extension, and death. In fish, the peptide elicites spurts of rapid swimming, with twisted motions, quivering fins and the lockjaw extended mouth syndrome. Rigid paralysis and death are observed at higher doses. In mollusks, this peptide is inactive. Injection of this peptide together with the kappa-conotoxin PVIIA causes the sudden tetanus of prey (STOP) syndrome, which is a single, lethal 'fin-pop' in envenomed fish. The polypeptide is Delta-conotoxin PVIA (Conus purpurascens (Purple cone)).